Consider the following 151-residue polypeptide: MIIMDVSVQRRMAAEILKCGIERVWIDPTQLDRVKMAMSKDDIRALIKEGVIKKKQKKGISSARVKKLKEQRKKGRRRGPGSRRGAAGARTPPKERWMATIRALRKTLKQLRDSGKIDRKVYRKLYRMAKGGAFRSRSHLFLYMREHELLK.

Positions K57–G81 are enriched in basic residues. A disordered region spans residues K57 to E95.

The protein belongs to the eukaryotic ribosomal protein eL19 family. As to quaternary structure, part of the 50S ribosomal subunit.

Functionally, binds to the 23S rRNA. This Methanocaldococcus jannaschii (strain ATCC 43067 / DSM 2661 / JAL-1 / JCM 10045 / NBRC 100440) (Methanococcus jannaschii) protein is Large ribosomal subunit protein eL19.